The chain runs to 370 residues: Dual-specificity RNA methyltransferase RlmN (370 aa).

The active-site Proton acceptor is glutamate 93. Residues 99-337 (EEGRGTLCVS…VTTVRKTRGD (239 aa)) form the Radical SAM core domain. The cysteines at positions 106 and 343 are disulfide-linked. [4Fe-4S] cluster contacts are provided by cysteine 113, cysteine 117, and cysteine 120. S-adenosyl-L-methionine is bound by residues 167–168 (GE), serine 199, 221–223 (SLH), and asparagine 300. The active-site S-methylcysteine intermediate is cysteine 343.

The protein belongs to the radical SAM superfamily. RlmN family. [4Fe-4S] cluster is required as a cofactor.

The protein resides in the cytoplasm. It carries out the reaction adenosine(2503) in 23S rRNA + 2 reduced [2Fe-2S]-[ferredoxin] + 2 S-adenosyl-L-methionine = 2-methyladenosine(2503) in 23S rRNA + 5'-deoxyadenosine + L-methionine + 2 oxidized [2Fe-2S]-[ferredoxin] + S-adenosyl-L-homocysteine. It catalyses the reaction adenosine(37) in tRNA + 2 reduced [2Fe-2S]-[ferredoxin] + 2 S-adenosyl-L-methionine = 2-methyladenosine(37) in tRNA + 5'-deoxyadenosine + L-methionine + 2 oxidized [2Fe-2S]-[ferredoxin] + S-adenosyl-L-homocysteine. Functionally, specifically methylates position 2 of adenine 2503 in 23S rRNA and position 2 of adenine 37 in tRNAs. m2A2503 modification seems to play a crucial role in the proofreading step occurring at the peptidyl transferase center and thus would serve to optimize ribosomal fidelity. The chain is Dual-specificity RNA methyltransferase RlmN from Francisella tularensis subsp. holarctica (strain LVS).